The following is a 62-amino-acid chain: UPF0434 protein NGR_c31900 (62 aa).

Belongs to the UPF0434 family.

This is UPF0434 protein NGR_c31900 from Sinorhizobium fredii (strain NBRC 101917 / NGR234).